A 742-amino-acid chain; its full sequence is Phosphoribosylformylglycinamidine synthase subunit PurL (742 aa).

The active site involves H53. Positions 56 and 95 each coordinate ATP. Residue E97 participates in Mg(2+) binding. Residues 98 to 101 and R120 each bind substrate; that span reads SHNH. H99 serves as the catalytic Proton acceptor. D121 provides a ligand contact to Mg(2+). Position 245 (Q245) interacts with substrate. D275 contributes to the Mg(2+) binding site. 319 to 321 is a binding site for substrate; it reads ESQ. Positions 502 and 539 each coordinate ATP. N540 serves as a coordination point for Mg(2+). Residue S542 participates in substrate binding.

It belongs to the FGAMS family. As to quaternary structure, monomer. Part of the FGAM synthase complex composed of 1 PurL, 1 PurQ and 2 PurS subunits.

Its subcellular location is the cytoplasm. It catalyses the reaction N(2)-formyl-N(1)-(5-phospho-beta-D-ribosyl)glycinamide + L-glutamine + ATP + H2O = 2-formamido-N(1)-(5-O-phospho-beta-D-ribosyl)acetamidine + L-glutamate + ADP + phosphate + H(+). It participates in purine metabolism; IMP biosynthesis via de novo pathway; 5-amino-1-(5-phospho-D-ribosyl)imidazole from N(2)-formyl-N(1)-(5-phospho-D-ribosyl)glycinamide: step 1/2. Functionally, part of the phosphoribosylformylglycinamidine synthase complex involved in the purines biosynthetic pathway. Catalyzes the ATP-dependent conversion of formylglycinamide ribonucleotide (FGAR) and glutamine to yield formylglycinamidine ribonucleotide (FGAM) and glutamate. The FGAM synthase complex is composed of three subunits. PurQ produces an ammonia molecule by converting glutamine to glutamate. PurL transfers the ammonia molecule to FGAR to form FGAM in an ATP-dependent manner. PurS interacts with PurQ and PurL and is thought to assist in the transfer of the ammonia molecule from PurQ to PurL. The chain is Phosphoribosylformylglycinamidine synthase subunit PurL from Lactobacillus acidophilus (strain ATCC 700396 / NCK56 / N2 / NCFM).